We begin with the raw amino-acid sequence, 426 residues long: Enolase (426 aa).

A (2R)-2-phosphoglycerate-binding site is contributed by Gln163. Glu205 functions as the Proton donor in the catalytic mechanism. 3 residues coordinate Mg(2+): Asp242, Glu283, and Asp310. Residues Lys335, Arg364, Ser365, and Lys386 each coordinate (2R)-2-phosphoglycerate. Residue Lys335 is the Proton acceptor of the active site.

This sequence belongs to the enolase family. The cofactor is Mg(2+).

It localises to the cytoplasm. The protein localises to the secreted. It is found in the cell surface. The catalysed reaction is (2R)-2-phosphoglycerate = phosphoenolpyruvate + H2O. The protein operates within carbohydrate degradation; glycolysis; pyruvate from D-glyceraldehyde 3-phosphate: step 4/5. Functionally, catalyzes the reversible conversion of 2-phosphoglycerate (2-PG) into phosphoenolpyruvate (PEP). It is essential for the degradation of carbohydrates via glycolysis. In Aquifex aeolicus (strain VF5), this protein is Enolase.